Consider the following 497-residue polypeptide: UDP-N-acetylmuramoyl-L-alanyl-D-glutamate--2,6-diaminopimelate ligase (497 aa).

Residue Ser32 coordinates UDP-N-acetyl-alpha-D-muramoyl-L-alanyl-D-glutamate. 113 to 119 serves as a coordination point for ATP; the sequence is GTNGKTT. Residues 155–156, Ser182, Gln188, and Arg190 each bind UDP-N-acetyl-alpha-D-muramoyl-L-alanyl-D-glutamate; that span reads TT. The residue at position 222 (Lys222) is an N6-carboxylysine. Residues Arg385, 409–412, Gly460, and Glu464 each bind meso-2,6-diaminopimelate; that span reads DNPR. Residues 409–412 carry the Meso-diaminopimelate recognition motif motif; sequence DNPR.

The protein belongs to the MurCDEF family. MurE subfamily. It depends on Mg(2+) as a cofactor. In terms of processing, carboxylation is probably crucial for Mg(2+) binding and, consequently, for the gamma-phosphate positioning of ATP.

Its subcellular location is the cytoplasm. The catalysed reaction is UDP-N-acetyl-alpha-D-muramoyl-L-alanyl-D-glutamate + meso-2,6-diaminopimelate + ATP = UDP-N-acetyl-alpha-D-muramoyl-L-alanyl-gamma-D-glutamyl-meso-2,6-diaminopimelate + ADP + phosphate + H(+). It participates in cell wall biogenesis; peptidoglycan biosynthesis. Functionally, catalyzes the addition of meso-diaminopimelic acid to the nucleotide precursor UDP-N-acetylmuramoyl-L-alanyl-D-glutamate (UMAG) in the biosynthesis of bacterial cell-wall peptidoglycan. This chain is UDP-N-acetylmuramoyl-L-alanyl-D-glutamate--2,6-diaminopimelate ligase, found in Thermosynechococcus vestitus (strain NIES-2133 / IAM M-273 / BP-1).